Reading from the N-terminus, the 201-residue chain is MAERRVPFSLLRGPSWDPFRDWYPAHSRLFDQAFGLPRLPEEWSQWLSHSGWPGYVRALPAAAIEGPAYNRALSRQLSSGVSEIQQTADRWRVSLDVNHFAPEELTVKTKDGVVEITGKHEERQDEHGYISRCFTRKYTLPPGVDPTLVSSSLSPEGTLTVEAPLPKSATQSAEITIPVTFQARAQLGGPEAGKSEQPENK.

Residue arginine 12 is modified to Omega-N-methylarginine. At serine 15 the chain carries Phosphoserine; by MAPKAPK2 and MAPKAPK3. Serine 27 bears the Phosphoserine mark. Residues alanine 68–lysine 201 are interaction with TGFB1I1. In terms of domain architecture, sHSP spans alanine 72 to threonine 180. Phosphoserine; by MAPKAPK2, MAPKAPK3 and MAPKAPK5 is present on residues serine 74 and serine 78. Phosphoserine occurs at positions 79, 82, and 94. Position 119 is an N6-acetyllysine (lysine 119). Threonine 170 bears the Phosphothreonine mark. Phosphoserine occurs at positions 172 and 195.

This sequence belongs to the small heat shock protein (HSP20) family. In terms of assembly, homooligomer. Homodimer; becomes monomeric upon activation. Heterooligomer; with HSPB6. Associates with alpha- and beta-tubulin. Interacts with TGFB1I1. Interacts with CRYAB. Interacts with HSPB8. Interacts with HSPBAP1. Phosphorylated upon exposure to protein kinase C activators and heat shock. Phosphorylation by MAPKAPK2 and MAPKAPK3 in response to stress dissociates HSPB1 from large small heat-shock protein (sHsps) oligomers and impairs its chaperone activity and ability to protect against oxidative stress effectively. Phosphorylation by MAPKAPK5 in response to PKA stimulation induces F-actin rearrangement.

The protein localises to the cytoplasm. It localises to the nucleus. It is found in the cytoskeleton. The protein resides in the spindle. Its function is as follows. Small heat shock protein which functions as a molecular chaperone probably maintaining denatured proteins in a folding-competent state. Plays a role in stress resistance and actin organization. Through its molecular chaperone activity may regulate numerous biological processes including the phosphorylation and the axonal transport of neurofilament proteins. The sequence is that of Heat shock protein beta-1 (HSPB1) from Bos taurus (Bovine).